Here is a 249-residue protein sequence, read N- to C-terminus: tRNA pseudouridine synthase A (249 aa).

Catalysis depends on Asp-52, which acts as the Nucleophile. Position 110 (Tyr-110) interacts with substrate.

Belongs to the tRNA pseudouridine synthase TruA family. Homodimer.

It carries out the reaction uridine(38/39/40) in tRNA = pseudouridine(38/39/40) in tRNA. In terms of biological role, formation of pseudouridine at positions 38, 39 and 40 in the anticodon stem and loop of transfer RNAs. This chain is tRNA pseudouridine synthase A, found in Azobacteroides pseudotrichonymphae genomovar. CFP2.